The chain runs to 244 residues: Cell division protein ZapD (244 aa).

It belongs to the ZapD family. In terms of assembly, interacts with FtsZ.

The protein localises to the cytoplasm. In terms of biological role, cell division factor that enhances FtsZ-ring assembly. Directly interacts with FtsZ and promotes bundling of FtsZ protofilaments, with a reduction in FtsZ GTPase activity. This chain is Cell division protein ZapD, found in Shewanella sp. (strain MR-7).